The following is a 356-amino-acid chain: Phosphate acyltransferase (356 aa).

Belongs to the PlsX family. As to quaternary structure, homodimer. Probably interacts with PlsY.

The protein localises to the cytoplasm. It carries out the reaction a fatty acyl-[ACP] + phosphate = an acyl phosphate + holo-[ACP]. Its pathway is lipid metabolism; phospholipid metabolism. Functionally, catalyzes the reversible formation of acyl-phosphate (acyl-PO(4)) from acyl-[acyl-carrier-protein] (acyl-ACP). This enzyme utilizes acyl-ACP as fatty acyl donor, but not acyl-CoA. The sequence is that of Phosphate acyltransferase from Stutzerimonas stutzeri (strain A1501) (Pseudomonas stutzeri).